The sequence spans 251 residues: Triosephosphate isomerase (251 aa).

9-11 (NWK) serves as a coordination point for substrate. Histidine 95 (electrophile) is an active-site residue. Glutamate 167 (proton acceptor) is an active-site residue. Substrate-binding positions include glycine 173, serine 212, and 233–234 (GG).

The protein belongs to the triosephosphate isomerase family. As to quaternary structure, homodimer.

The protein localises to the cytoplasm. It catalyses the reaction D-glyceraldehyde 3-phosphate = dihydroxyacetone phosphate. Its pathway is carbohydrate biosynthesis; gluconeogenesis. It participates in carbohydrate degradation; glycolysis; D-glyceraldehyde 3-phosphate from glycerone phosphate: step 1/1. Functionally, involved in the gluconeogenesis. Catalyzes stereospecifically the conversion of dihydroxyacetone phosphate (DHAP) to D-glyceraldehyde-3-phosphate (G3P). The sequence is that of Triosephosphate isomerase from Pseudomonas savastanoi pv. phaseolicola (strain 1448A / Race 6) (Pseudomonas syringae pv. phaseolicola (strain 1448A / Race 6)).